A 339-amino-acid chain; its full sequence is Dihydroorotate dehydrogenase (quinone) (339 aa).

Residues 62 to 66 (AGLDK) and Thr86 each bind FMN. A substrate-binding site is contributed by Lys66. 111-115 (NRMGF) contributes to the substrate binding site. Residues Asn139 and Asn172 each coordinate FMN. Position 172 (Asn172) interacts with substrate. Ser175 acts as the Nucleophile in catalysis. A substrate-binding site is contributed by Asn177. Residues Lys217 and Thr245 each coordinate FMN. 246 to 247 (NT) lines the substrate pocket. Residues Gly268, Gly297, and 318–319 (YS) each bind FMN.

This sequence belongs to the dihydroorotate dehydrogenase family. Type 2 subfamily. Monomer. FMN is required as a cofactor.

Its subcellular location is the cell membrane. It carries out the reaction (S)-dihydroorotate + a quinone = orotate + a quinol. It participates in pyrimidine metabolism; UMP biosynthesis via de novo pathway; orotate from (S)-dihydroorotate (quinone route): step 1/1. Its function is as follows. Catalyzes the conversion of dihydroorotate to orotate with quinone as electron acceptor. The polypeptide is Dihydroorotate dehydrogenase (quinone) (Shewanella frigidimarina (strain NCIMB 400)).